The sequence spans 116 residues: Methionine-R-sulfoxide reductase B1 (116 aa).

One can recognise a MsrB domain in the interval methionine 1–lysine 106. Zn(2+)-binding residues include cysteine 23, cysteine 26, cysteine 71, and cysteine 74. The active-site Nucleophile is selenocysteine 95. Position 95 (selenocysteine 95) is a non-standard amino acid, selenocysteine.

The protein belongs to the MsrB Met sulfoxide reductase family. The cofactor is Zn(2+). Truncated MSRB1/SEPX1 proteins produced by failed UGA/Sec decoding are ubiquitinated by the CRL2(FEM1C) E3 ubiquitin-protein ligase complex.

Its subcellular location is the cytoplasm. It localises to the nucleus. The protein localises to the cytoskeleton. The enzyme catalyses L-methionyl-[protein] + [thioredoxin]-disulfide + H2O = L-methionyl-(R)-S-oxide-[protein] + [thioredoxin]-dithiol. The catalysed reaction is [thioredoxin]-disulfide + L-methionine + H2O = L-methionine (R)-S-oxide + [thioredoxin]-dithiol. Its function is as follows. Methionine-sulfoxide reductase that specifically reduces methionine (R)-sulfoxide back to methionine. While in many cases, methionine oxidation is the result of random oxidation following oxidative stress, methionine oxidation is also a post-translational modification that takes place on specific residue. Acts as a regulator of actin assembly by reducing methionine (R)-sulfoxide mediated by MICALs (MICAL1, MICAL2 or MICAL3) on actin, thereby promoting filament repolymerization. Plays a role in innate immunity by reducing oxidized actin, leading to actin repolymerization in macrophages. This is Methionine-R-sulfoxide reductase B1 (MSRB1) from Bos taurus (Bovine).